Reading from the N-terminus, the 128-residue chain is Large ribosomal subunit protein bL20 (128 aa).

It belongs to the bacterial ribosomal protein bL20 family.

Functionally, binds directly to 23S ribosomal RNA and is necessary for the in vitro assembly process of the 50S ribosomal subunit. It is not involved in the protein synthesizing functions of that subunit. This Corynebacterium efficiens (strain DSM 44549 / YS-314 / AJ 12310 / JCM 11189 / NBRC 100395) protein is Large ribosomal subunit protein bL20.